The sequence spans 162 residues: Ciliary microtubule inner protein 5 (162 aa).

The tract at residues 1–44 (MGSHPTPGLQRTTSAGYRLPPTRPPASVSPAARGGPMASRGLAG) is disordered.

Its subcellular location is the cell projection. The protein localises to the cilium. The polypeptide is Ciliary microtubule inner protein 5 (Homo sapiens (Human)).